We begin with the raw amino-acid sequence, 484 residues long: ATP synthase subunit beta (484 aa).

ATP is bound at residue 168–175; that stretch reads GGAGVGKT.

Belongs to the ATPase alpha/beta chains family. F-type ATPases have 2 components, CF(1) - the catalytic core - and CF(0) - the membrane proton channel. CF(1) has five subunits: alpha(3), beta(3), gamma(1), delta(1), epsilon(1). CF(0) has three main subunits: a(1), b(2) and c(9-12). The alpha and beta chains form an alternating ring which encloses part of the gamma chain. CF(1) is attached to CF(0) by a central stalk formed by the gamma and epsilon chains, while a peripheral stalk is formed by the delta and b chains.

The protein resides in the cell membrane. The enzyme catalyses ATP + H2O + 4 H(+)(in) = ADP + phosphate + 5 H(+)(out). Produces ATP from ADP in the presence of a proton gradient across the membrane. The catalytic sites are hosted primarily by the beta subunits. This Pseudarthrobacter chlorophenolicus (strain ATCC 700700 / DSM 12829 / CIP 107037 / JCM 12360 / KCTC 9906 / NCIMB 13794 / A6) (Arthrobacter chlorophenolicus) protein is ATP synthase subunit beta.